The chain runs to 423 residues: Serine hydroxymethyltransferase (423 aa).

(6S)-5,6,7,8-tetrahydrofolate is bound by residues Leu-125 and 129–131; that span reads GHL. Position 234 is an N6-(pyridoxal phosphate)lysine (Lys-234). Glu-249 contributes to the (6S)-5,6,7,8-tetrahydrofolate binding site.

It belongs to the SHMT family. Homodimer. Pyridoxal 5'-phosphate serves as cofactor.

It is found in the cytoplasm. The enzyme catalyses (6R)-5,10-methylene-5,6,7,8-tetrahydrofolate + glycine + H2O = (6S)-5,6,7,8-tetrahydrofolate + L-serine. The protein operates within one-carbon metabolism; tetrahydrofolate interconversion. It participates in amino-acid biosynthesis; glycine biosynthesis; glycine from L-serine: step 1/1. In terms of biological role, catalyzes the reversible interconversion of serine and glycine with tetrahydrofolate (THF) serving as the one-carbon carrier. This reaction serves as the major source of one-carbon groups required for the biosynthesis of purines, thymidylate, methionine, and other important biomolecules. Also exhibits THF-independent aldolase activity toward beta-hydroxyamino acids, producing glycine and aldehydes, via a retro-aldol mechanism. In Thermobifida fusca (strain YX), this protein is Serine hydroxymethyltransferase.